The following is a 227-amino-acid chain: Hydroxylase/desaturase asaB (227 aa).

Belongs to the asaB hydroxylase/desaturase family.

It functions in the pathway secondary metabolite biosynthesis. In terms of biological role, hydroxylase/desaturase; part of the gene cluster that mediates the biosynthesis of aspergillic acid, a hydroxamic acid-containing pyrazinone with aliphatic side chains that originates from leucine (Leu) and isoleucine (Ile). Aspergillic acid has antibiotic properties and was shown to be lethal to mice. The first step in the pathway is the production of deoxyaspergillic acid via a condensation between the Ile amine and the Leu carboxylic acid, followed by a reductive release from the protein forming the dipeptide aldehyde NH(2)-Leu-Ile-CHO, which could undergo an intermolecular cyclization resulting in a dihydropyrazinone. As the NRPS asaC lacks a condensation domain, it is improbable that it is responsible for condensation of Leu and Ile. One possibility is that asaC acts on a previously condensed dipeptide and functions as a Leu-Ile reductase to yield deoxyaspergillic acid. After asaC forms deoxyaspergillic acid, the cytochrome P450 asaD oxidizes the pyrazinone to the hydroxamic acid-containing bioactive metabolite aspergillic acid. The hydroxylase/desaturase asaB can then convert aspergillic acid to hydroxyaspergillic acid. Both aspergillic acid and hydroxyaspergillic acid can form complexes with iron producing ferriaspergillin analogs. In Aspergillus flavus (strain ATCC 200026 / FGSC A1120 / IAM 13836 / NRRL 3357 / JCM 12722 / SRRC 167), this protein is Hydroxylase/desaturase asaB.